Reading from the N-terminus, the 449-residue chain is tRNA-2-methylthio-N(6)-dimethylallyladenosine synthase (449 aa).

In terms of domain architecture, MTTase N-terminal spans 3-124 (KMLYIKTYGC…LPTMLEKLDS (122 aa)). 6 residues coordinate [4Fe-4S] cluster: Cys-12, Cys-48, Cys-87, Cys-163, Cys-167, and Cys-170. One can recognise a Radical SAM core domain in the interval 149-380 (KSPTVSGLVS…QAQLMLQQLE (232 aa)). The 65-residue stretch at 383-447 (QKLIGKVVPV…ASSLFGEVCP (65 aa)) folds into the TRAM domain.

Belongs to the methylthiotransferase family. MiaB subfamily. Monomer. It depends on [4Fe-4S] cluster as a cofactor.

The protein resides in the cytoplasm. The catalysed reaction is N(6)-dimethylallyladenosine(37) in tRNA + (sulfur carrier)-SH + AH2 + 2 S-adenosyl-L-methionine = 2-methylsulfanyl-N(6)-dimethylallyladenosine(37) in tRNA + (sulfur carrier)-H + 5'-deoxyadenosine + L-methionine + A + S-adenosyl-L-homocysteine + 2 H(+). Catalyzes the methylthiolation of N6-(dimethylallyl)adenosine (i(6)A), leading to the formation of 2-methylthio-N6-(dimethylallyl)adenosine (ms(2)i(6)A) at position 37 in tRNAs that read codons beginning with uridine. The protein is tRNA-2-methylthio-N(6)-dimethylallyladenosine synthase of Orientia tsutsugamushi (strain Boryong) (Rickettsia tsutsugamushi).